A 238-amino-acid chain; its full sequence is IkB-like protein (238 aa).

ANK repeat units follow at residues 48 to 80 (GSSVFMWICIYGRIDFLKFLFKQESYPGEIINH), 87 to 118 (GNSALHYLAEKKNHLILEEVLGYFGKNGTRIC), 124 to 153 (GMTPVMKAAMRGRTLNMLSLIKFGADPTQK), and 158 to 187 (GFTAWDWAVFTGNMELVKSLNHDYQKPLYM). Positions 80-86 (HHRRDND) match the Nuclear localization signal motif. Residues 202–213 (KKKPKIIITGCK) carry the Nuclear localization signal motif. Positions 205–212 (PKIIITGC) match the PxIxITxC motif; Interaction with host PPP3CA motif. Residues 227–230 (FLCV) carry the FLCV motif motif.

This sequence belongs to the asfivirus A238L family. Interacts with host PPIA. Interacts with host PPP3CA/Calcineurin. Interacts with host RELA/p65; interaction of the 32 kDa form with host RELA results in the formation of a stable complex with NF-kappa-B. Interacts with host PPP3R1. Interacts with host EP300; this interaction inhibits the association of host EP300 with host RELA, JUN and NFATC2. The protein exists in a 28 kDa and a 32 kDa form, probably due to post-translational modifications which are neither phosphorylation, nor sumoylation.

It is found in the host nucleus. It localises to the host cytoplasm. Its function is as follows. IkB-like protein that inhibits the binding of NF-kappa-B to DNA, thereby downregulating pro-inflammatory cytokine production. Forms a heterodimer with the NF-kappa-B subunit RELA/p65 and prevents the activation of the NF-kappa-B transcription factor. Inhibits calcineurin function, which is required for the induction of nuclear factor of activated T cells (NFAT)-dependent immune response genes. Prevents the binding of substrates to calcineurin without affecting the phosphatase activity. Does not contain the serine residues that are phosphorylated by host IkB kinase and thus is not degraded following stimulation of the NFkB pathway. This chain is IkB-like protein (A238L), found in Ornithodoros (relapsing fever ticks).